Reading from the N-terminus, the 1259-residue chain is Zinc finger protein BRUTUS-like At1g74770 (1259 aa).

The chain crosses the membrane as a helical span at residues L441–F461. 2 stretches are compositionally biased toward basic and acidic residues: residues K904–K916 and E924–S934. The interval K904 to S938 is disordered. Residues P1018–S1087 form a CHY-type zinc finger. Zn(2+)-binding residues include C1025, H1027, C1038, C1039, C1045, C1048, H1049, H1055, C1067, C1070, C1080, C1085, C1094, C1097, H1108, C1109, C1112, C1115, H1127, C1128, C1131, C1134, H1142, and C1144. Residues M1089–N1152 form a CTCHY-type zinc finger. The RING-type; atypical zinc-finger motif lies at C1153–S1195.

As to quaternary structure, binds zinc and iron ions.

It localises to the membrane. The protein localises to the nucleus. The protein operates within protein modification; protein ubiquitination. Functionally, probable E3 ubiquitin-protein ligase that may regulate the response to iron deficiency and thus contributes to iron homeostasis. The polypeptide is Zinc finger protein BRUTUS-like At1g74770 (Arabidopsis thaliana (Mouse-ear cress)).